Consider the following 201-residue polypeptide: Small ribosomal subunit protein uS4c (201 aa).

Residues 20–43 (GLTSKRPRAGSDLRNQSRAGKKSQ) form a disordered region. Residues 89–150 (MRLDNILFRL…EQKSRVMIQN (62 aa)) form the S4 RNA-binding domain.

It belongs to the universal ribosomal protein uS4 family. As to quaternary structure, part of the 30S ribosomal subunit. Contacts protein S5. The interaction surface between S4 and S5 is involved in control of translational fidelity.

The protein localises to the plastid. The protein resides in the chloroplast. In terms of biological role, one of the primary rRNA binding proteins, it binds directly to 16S rRNA where it nucleates assembly of the body of the 30S subunit. Functionally, with S5 and S12 plays an important role in translational accuracy. The chain is Small ribosomal subunit protein uS4c (rps4) from Populus alba (White poplar).